Reading from the N-terminus, the 394-residue chain is Elongation factor Tu 2 (394 aa).

The 195-residue stretch at 10–204 (KPHVNVGTIG…ALDSYIPEPE (195 aa)) folds into the tr-type G domain. The tract at residues 19–26 (GHVDHGKT) is G1. 19 to 26 (GHVDHGKT) contacts GTP. Residue Thr26 participates in Mg(2+) binding. The tract at residues 60-64 (GITIS) is G2. Residues 81-84 (DCPG) are G3. GTP is bound by residues 81-85 (DCPGH) and 136-139 (NKCD). The interval 136-139 (NKCD) is G4. Positions 174–176 (SAL) are G5.

The protein belongs to the TRAFAC class translation factor GTPase superfamily. Classic translation factor GTPase family. EF-Tu/EF-1A subfamily. As to quaternary structure, monomer.

It localises to the cytoplasm. The catalysed reaction is GTP + H2O = GDP + phosphate + H(+). Functionally, GTP hydrolase that promotes the GTP-dependent binding of aminoacyl-tRNA to the A-site of ribosomes during protein biosynthesis. The sequence is that of Elongation factor Tu 2 from Pseudoalteromonas translucida (strain TAC 125).